The primary structure comprises 652 residues: DNA ligase (652 aa).

NAD(+)-binding positions include D29–D33, S78–L79, and E107. The active-site N6-AMP-lysine intermediate is the K109. R130, E164, K278, and K302 together coordinate NAD(+). Zn(2+) is bound by residues C395, C398, C413, and C418. Positions D577–L652 constitute a BRCT domain.

It belongs to the NAD-dependent DNA ligase family. LigA subfamily. The cofactor is Mg(2+). Mn(2+) serves as cofactor.

The catalysed reaction is NAD(+) + (deoxyribonucleotide)n-3'-hydroxyl + 5'-phospho-(deoxyribonucleotide)m = (deoxyribonucleotide)n+m + AMP + beta-nicotinamide D-nucleotide.. Its function is as follows. DNA ligase that catalyzes the formation of phosphodiester linkages between 5'-phosphoryl and 3'-hydroxyl groups in double-stranded DNA using NAD as a coenzyme and as the energy source for the reaction. It is essential for DNA replication and repair of damaged DNA. The polypeptide is DNA ligase (Streptococcus suis (strain 05ZYH33)).